The following is a 584-amino-acid chain: Membrane frizzled-related protein (584 aa).

At 1-69 the chain is on the cytoplasmic side; that stretch reads MKDYDDVILR…QPDCHFSWFC (69 aa). A helical; Signal-anchor for type II membrane protein membrane pass occupies residues 70–90; sequence ILLLSGLLLLLLGLLVAVILA. The Extracellular portion of the chain corresponds to 91–584; that stretch reads QLQATSLPRT…AASLEACSQP (494 aa). Positions 108–140 are disordered; the sequence is RGLTPMGVIPSTTPNTTTTTTTTTPARTGQQEA. Low complexity predominate over residues 119-132; sequence TTPNTTTTTTTTTP. 2 disulfides stabilise this stretch: Cys150–Cys176 and Cys203–Cys222. Residues 150–259 form the CUB 1 domain; it reads CGGLLPGPSG…SGFQAWYQAV (110 aa). Asn233 is a glycosylation site (N-linked (GlcNAc...) asparagine). Positions 265–301 constitute an LDL-receptor class A 1 domain; the sequence is SCAHNEFHCDLLLCLKRDSVCDGITECADGSDEANCS. 5 disulfides stabilise this stretch: Cys266–Cys278, Cys273–Cys291, Cys285–Cys300, Cys307–Cys333, and Cys360–Cys383. Residues 307–420 enclose the CUB 2 domain; that stretch reads CGGNLTGLYG…GGFLATYQAI (114 aa). An N-linked (GlcNAc...) asparagine glycan is attached at Asn421. Positions 426–460 constitute an LDL-receptor class A 2 domain; sequence GCPWAEFCQSGGYRDLQWMCDLWKDCANDSNDNCS. 7 disulfide bridges follow: Cys433–Cys451, Cys445–Cys459, Cys471–Cys533, Cys479–Cys526, Cys517–Cys554, Cys543–Cys581, and Cys547–Cys569. Asn458 is a glycosylation site (N-linked (GlcNAc...) asparagine). Residues 466–584 form the FZ domain; the sequence is QPDLTCEPVQ…AASLEACSQP (119 aa).

In terms of assembly, interacts with C1QTNF5. Expressed in retinal pigment epithelium and ciliary epithelium of the eye.

It is found in the apical cell membrane. In terms of biological role, may play a role in eye development. The polypeptide is Membrane frizzled-related protein (Mfrp) (Mus musculus (Mouse)).